A 373-amino-acid chain; its full sequence is Probable tRNA sulfurtransferase (373 aa).

The region spanning Asn-54 to Ile-158 is the THUMP domain. ATP-binding positions include Leu-176–Phe-177, Asn-201–Phe-202, Lys-256, Gly-278, and Gln-287.

This sequence belongs to the ThiI family.

It localises to the cytoplasm. It carries out the reaction [ThiI sulfur-carrier protein]-S-sulfanyl-L-cysteine + a uridine in tRNA + 2 reduced [2Fe-2S]-[ferredoxin] + ATP + H(+) = [ThiI sulfur-carrier protein]-L-cysteine + a 4-thiouridine in tRNA + 2 oxidized [2Fe-2S]-[ferredoxin] + AMP + diphosphate. It catalyses the reaction [ThiS sulfur-carrier protein]-C-terminal Gly-Gly-AMP + S-sulfanyl-L-cysteinyl-[cysteine desulfurase] + AH2 = [ThiS sulfur-carrier protein]-C-terminal-Gly-aminoethanethioate + L-cysteinyl-[cysteine desulfurase] + A + AMP + 2 H(+). It functions in the pathway cofactor biosynthesis; thiamine diphosphate biosynthesis. Its function is as follows. Catalyzes the ATP-dependent transfer of a sulfur to tRNA to produce 4-thiouridine in position 8 of tRNAs, which functions as a near-UV photosensor. Also catalyzes the transfer of sulfur to the sulfur carrier protein ThiS, forming ThiS-thiocarboxylate. This is a step in the synthesis of thiazole, in the thiamine biosynthesis pathway. The sulfur is donated as persulfide by IscS. The polypeptide is Probable tRNA sulfurtransferase (Saccharolobus islandicus (strain L.S.2.15 / Lassen #1) (Sulfolobus islandicus)).